Reading from the N-terminus, the 38-residue chain is Potassium channel toxin alpha-KTx 2.21 (38 aa).

Intrachain disulfides connect Cys-7–Cys-29, Cys-13–Cys-34, and Cys-17–Cys-36.

Expressed by the venom gland.

The protein localises to the secreted. In terms of biological role, inhibits human voltage-gated potassium (Kv) channels Kv1.2/KCNA2 and Kv1.3/KCNA3. Does not block human Kv1.1/KCNA1 at 100nM concentration. The chain is Potassium channel toxin alpha-KTx 2.21 from Centruroides bonito (Scorpion).